Here is a 340-residue protein sequence, read N- to C-terminus: Alcohol dehydrogenase patD (340 aa).

Cys46 contacts Zn(2+). Residue His47 coordinates NAD(+). Residues His67, Glu68, Cys101, Cys104, Cys112, and Cys154 each coordinate Zn(2+). Residue His67 participates in substrate binding. Residues 178 to 183 (GLGGLG), 198 to 203 (VALSRD), Lys206, 265 to 267 (LSI), 289 to 291 (PSG), and 297 to 299 (EDA) each bind NAD(+).

It belongs to the zinc-containing alcohol dehydrogenase family. It depends on Zn(2+) as a cofactor.

The protein resides in the cytoplasm. It is found in the cytosol. The catalysed reaction is neopatulin + NADPH + H(+) = (E)-ascladiol + NADP(+). It participates in mycotoxin biosynthesis; patulin biosynthesis. In terms of biological role, alcohol dehydrogenase; part of the gene cluster that mediates the biosynthesis of patulin, an acetate-derived tetraketide mycotoxin produced by several fungal species that shows antimicrobial properties against several bacteria. PatD catalyzes the conversion of neopatulin into E-ascladiol. The pathway begins with the synthesis of 6-methylsalicylic acid by the polyketide synthase (PKS) patK via condensation of acetate and malonate units. The 6-methylsalicylic acid decarboxylase patG then catalyzes the decarboxylation of 6-methylsalicylic acid to yield m-cresol (also known as 3-methylphenol). These first reactions occur in the cytosol. The intermediate m-cresol is then transported into the endoplasmic reticulum where the cytochrome P450 monooxygenase patH converts it to m-hydroxybenzyl alcohol, which is further converted to gentisyl alcohol by the cytochrome P450 monooxygenase patI. The oxidoreductases patJ and patO further convert gentisyl alcohol to isoepoxydon in the vacuole. PatN catalyzes then the transformation of isoepoxydon into phyllostine. The cluster protein patF is responsible for the conversion from phyllostine to neopatulin whereas the alcohol dehydrogenase patD converts neopatulin to E-ascladiol. The steps between isoepoxydon and E-ascladiol occur in the cytosol, and E-ascladiol is probably secreted to the extracellular space by one of the cluster-specific transporters patC or patM. Finally, the secreted patulin synthase patE catalyzes the conversion of E-ascladiol to patulin. This is Alcohol dehydrogenase patD from Penicillium expansum (Blue mold rot fungus).